Here is a 366-residue protein sequence, read N- to C-terminus: G-protein coupled receptor 183-B (366 aa).

The Extracellular segment spans residues 1 to 24; that stretch reads MMSPDLDLNFSSNCNLYDHRPVAR. A glycan (N-linked (GlcNAc...) asparagine) is linked at Asn-9. Residues 25–50 traverse the membrane as a helical segment; the sequence is VLIPLVYSIICPVGLLGNALALHVVI. Residues 51 to 70 lie on the Cytoplasmic side of the membrane; sequence SSTTKINSITLYSANLAVSD. The chain crosses the membrane as a helical span at residues 71–88; the sequence is ILFCLSLPLRAVYYGLGF. At 89–98 the chain is on the extracellular side; the sequence is HWPMGEVLCK. Cys-97 and Cys-175 are oxidised to a cystine. Residues 99-120 traverse the membrane as a helical segment; it reads AIALLFYLNCYAGVNFMTCLAV. Topologically, residues 121–142 are cytoplasmic; sequence DRFVALVFPARLAKLRKAKNVR. A helical transmembrane segment spans residues 143–161; the sequence is FVCLAIWLLVLAQTLPLLT. At 162 to 187 the chain is on the extracellular side; sequence IGLTKTEPDSSITCMEYPNFEGVFKG. The chain crosses the membrane as a helical span at residues 188–210; sequence LPYMLIVAVVLGFGIPVMTIIAC. Topologically, residues 211-236 are cytoplasmic; sequence YSILTHKLHQAAKSNQLTERSGKTKK. Residues 237–260 traverse the membrane as a helical segment; it reads ARGVIAGVVFVFVVCFSPYHIDIL. At 261–280 the chain is on the extracellular side; the sequence is QYMIRKLLYETDCKELQSFQ. A helical membrane pass occupies residues 281-305; sequence ISLHITVCLMNLNSCLDPFVYFFAC. Topologically, residues 306-366 are cytoplasmic; sequence KGYKQKVMRM…QQICYQPSAT (61 aa).

It belongs to the G-protein coupled receptor 1 family.

The protein localises to the cell membrane. Functionally, probable receptor for oxysterols that plays a central role during humoral immunity. Promotes activated B-cell localization in the outer follicle and interfollicular regions. The polypeptide is G-protein coupled receptor 183-B (gpr183b) (Danio rerio (Zebrafish)).